We begin with the raw amino-acid sequence, 346 residues long: UDP-N-acetylenolpyruvoylglucosamine reductase (346 aa).

Residues 23 to 194 (FDVRAQFACR…TSVTFRLPKV (172 aa)) form the FAD-binding PCMH-type domain. The active site involves R170. S246 (proton donor) is an active-site residue. E342 is an active-site residue.

The protein belongs to the MurB family. Requires FAD as cofactor.

It is found in the cytoplasm. It carries out the reaction UDP-N-acetyl-alpha-D-muramate + NADP(+) = UDP-N-acetyl-3-O-(1-carboxyvinyl)-alpha-D-glucosamine + NADPH + H(+). The protein operates within cell wall biogenesis; peptidoglycan biosynthesis. Functionally, cell wall formation. The protein is UDP-N-acetylenolpyruvoylglucosamine reductase of Paraburkholderia phytofirmans (strain DSM 17436 / LMG 22146 / PsJN) (Burkholderia phytofirmans).